The primary structure comprises 707 residues: Ribosomal RNA large subunit methyltransferase K/L (707 aa).

Residues 43-154 (QIYRCCLWSR…KDKAILGVDM (112 aa)) enclose the THUMP domain.

It belongs to the methyltransferase superfamily. RlmKL family.

The protein resides in the cytoplasm. The catalysed reaction is guanosine(2445) in 23S rRNA + S-adenosyl-L-methionine = N(2)-methylguanosine(2445) in 23S rRNA + S-adenosyl-L-homocysteine + H(+). The enzyme catalyses guanosine(2069) in 23S rRNA + S-adenosyl-L-methionine = N(2)-methylguanosine(2069) in 23S rRNA + S-adenosyl-L-homocysteine + H(+). Functionally, specifically methylates the guanine in position 2445 (m2G2445) and the guanine in position 2069 (m7G2069) of 23S rRNA. The chain is Ribosomal RNA large subunit methyltransferase K/L from Vibrio campbellii (strain ATCC BAA-1116).